Here is a 166-residue protein sequence, read N- to C-terminus: Small ribosomal subunit protein uS5 (166 aa).

Positions 11 to 74 (LQEKLIAVNR…EKARRNMINV (64 aa)) constitute an S5 DRBM domain.

It belongs to the universal ribosomal protein uS5 family. As to quaternary structure, part of the 30S ribosomal subunit. Contacts proteins S4 and S8.

With S4 and S12 plays an important role in translational accuracy. Functionally, located at the back of the 30S subunit body where it stabilizes the conformation of the head with respect to the body. The chain is Small ribosomal subunit protein uS5 from Pasteurella multocida (strain Pm70).